Consider the following 214-residue polypeptide: Adenylate kinase (214 aa).

10 to 15 lines the ATP pocket; sequence GAGKGT. The interval 30–59 is NMP; the sequence is STGDMFRDHKARGTEIGKQVQAIMDGGGLV. AMP-binding positions include Thr31, Arg36, 57-59, 85-88, and Gln92; these read GLV and GYPR. An LID region spans residues 126–163; it reads GRRSCPRCGAVYHVSQNPPRRAGYCDRDDAELVQREDD. ATP is bound at residue Arg127. Zn(2+)-binding residues include Cys130 and Cys133. 136 to 137 is an ATP binding site; the sequence is VY. 2 residues coordinate Zn(2+): Cys150 and Asp153. AMP is bound by residues Arg160 and Arg171. ATP is bound at residue Gly199.

The protein belongs to the adenylate kinase family. In terms of assembly, monomer.

It localises to the cytoplasm. The catalysed reaction is AMP + ATP = 2 ADP. The protein operates within purine metabolism; AMP biosynthesis via salvage pathway; AMP from ADP: step 1/1. Functionally, catalyzes the reversible transfer of the terminal phosphate group between ATP and AMP. Plays an important role in cellular energy homeostasis and in adenine nucleotide metabolism. The protein is Adenylate kinase of Anaeromyxobacter dehalogenans (strain 2CP-C).